Consider the following 164-residue polypeptide: uncharacterized protein (164 aa).

Residues 1-60 constitute a chloroplast transit peptide; that stretch reads MERSASVGVNDGRFGGNQFYSPSFSSSSSSSSMRHVNYSCGSCGYELNLSSTNRITSTIG.

The protein localises to the plastid. Its subcellular location is the chloroplast. This is an uncharacterized protein from Arabidopsis thaliana (Mouse-ear cress).